The primary structure comprises 357 residues: Cytoplasmic tRNA 2-thiolation protein 1 (357 aa).

Residues 314–348 are disordered; the sequence is GVSRTRGRRGEKAGLHPDVGRGGGGGSSGPAEVAS. Basic and acidic residues predominate over residues 321-332; that stretch reads RRGEKAGLHPDV.

This sequence belongs to the TtcA family. CTU1/NCS6/ATPBD3 subfamily.

The protein localises to the cytoplasm. It functions in the pathway tRNA modification; 5-methoxycarbonylmethyl-2-thiouridine-tRNA biosynthesis. Plays a central role in 2-thiolation of mcm(5)S(2)U at tRNA wobble positions of tRNA(Lys), tRNA(Glu) and tRNA(Gln). Directly binds tRNAs and probably acts by catalyzing adenylation of tRNAs, an intermediate required for 2-thiolation. It is unclear whether it acts as a sulfurtransferase that transfers sulfur from thiocarboxylated URM1 onto the uridine of tRNAs at wobble position. The polypeptide is Cytoplasmic tRNA 2-thiolation protein 1 (Chlamydomonas reinhardtii (Chlamydomonas smithii)).